Consider the following 235-residue polypeptide: Uridylate kinase (235 aa).

9-12 lines the ATP pocket; the sequence is KLSG. A UMP-binding site is contributed by glycine 51. ATP contacts are provided by glycine 52 and arginine 56. UMP-binding positions include aspartate 71 and 132 to 139; that span reads TGNPYFTT. The ATP site is built by threonine 159, tyrosine 165, and aspartate 168.

The protein belongs to the UMP kinase family. As to quaternary structure, homohexamer.

The protein localises to the cytoplasm. The enzyme catalyses UMP + ATP = UDP + ADP. It participates in pyrimidine metabolism; CTP biosynthesis via de novo pathway; UDP from UMP (UMPK route): step 1/1. Its activity is regulated as follows. Inhibited by UTP. Functionally, catalyzes the reversible phosphorylation of UMP to UDP. This is Uridylate kinase from Cytophaga hutchinsonii (strain ATCC 33406 / DSM 1761 / CIP 103989 / NBRC 15051 / NCIMB 9469 / D465).